The sequence spans 198 residues: Protein GrpE (198 aa).

It belongs to the GrpE family. As to quaternary structure, homodimer.

It localises to the cytoplasm. Its function is as follows. Participates actively in the response to hyperosmotic and heat shock by preventing the aggregation of stress-denatured proteins, in association with DnaK and GrpE. It is the nucleotide exchange factor for DnaK and may function as a thermosensor. Unfolded proteins bind initially to DnaJ; upon interaction with the DnaJ-bound protein, DnaK hydrolyzes its bound ATP, resulting in the formation of a stable complex. GrpE releases ADP from DnaK; ATP binding to DnaK triggers the release of the substrate protein, thus completing the reaction cycle. Several rounds of ATP-dependent interactions between DnaJ, DnaK and GrpE are required for fully efficient folding. This Lysinibacillus sphaericus (Bacillus sphaericus) protein is Protein GrpE.